Consider the following 264-residue polypeptide: MKFLVVFAVVRACVTPACAEMSAVSMSSSNKELEEKLYNSILTGDYDSAVRQSLEYESQGKGSIIQNVVNNLIIDKRRNTMEYCYKLWVGNGQEIVRKYFPLNFRLIMAGNYVKIIYRNYNLALKLGSTTNPSNERIAYGDGVDKHTELVSWKFITLWENNRVYFKIHNTKYNQYLKMSTTTCNCNSRDRVVYGGNSADSTREQWFFQPAKYENDVLFFIYNRQFNDALELGTIVNASGDRKAVGHDGEVAGLPDIYSWFITPF.

Residues 1 to 23 (MKFLVVFAVVRACVTPACAEMSA) form the signal peptide.

It belongs to the 30 kDa lipoprotein family.

The protein localises to the secreted. This is Low molecular mass lipoprotein PBMHPC-23 from Bombyx mori (Silk moth).